A 365-amino-acid polypeptide reads, in one-letter code: Histidinol-phosphate aminotransferase (365 aa).

N6-(pyridoxal phosphate)lysine is present on K220.

Belongs to the class-II pyridoxal-phosphate-dependent aminotransferase family. Histidinol-phosphate aminotransferase subfamily. Homodimer. Pyridoxal 5'-phosphate serves as cofactor.

The enzyme catalyses L-histidinol phosphate + 2-oxoglutarate = 3-(imidazol-4-yl)-2-oxopropyl phosphate + L-glutamate. Its pathway is amino-acid biosynthesis; L-histidine biosynthesis; L-histidine from 5-phospho-alpha-D-ribose 1-diphosphate: step 7/9. The protein is Histidinol-phosphate aminotransferase of Neisseria meningitidis serogroup B (strain ATCC BAA-335 / MC58).